The following is a 429-amino-acid chain: ETS domain-containing protein Elk-1 (429 aa).

The segment at residues 5–86 (VTLWQFLLQL…SGQKFVYKFV (82 aa)) is a DNA-binding region (ETS). Disordered regions lie at residues 119–146 (HAGP…GLAR), 165–204 (SLQP…SPNP), and 227–253 (APNQ…KVEG). Over residues 169–178 (QPQPPIPPRP) the composition is skewed to pro residues. Residues K231, K250, and K255 each participate in a glycyl lysine isopeptide (Lys-Gly) (interchain with G-Cter in SUMO) cross-link. The span at 302–312 (STSTTEITQPQ) shows a compositional bias: polar residues. The segment at 302–354 (STSTTEITQPQKGRKPRDLELPLSPSLLGGQGPERTPGSGTSSGLQAPGPALT) is disordered. S325 carries the post-translational modification Phosphoserine; by MAPK1. Phosphothreonine; by MAPK1 is present on residues T337, T354, T364, and T369. Positions 350–400 (GPALTPSLLPTHTLTPVLLTPSSLPPSIHFWSTLSPIAPRSPAKLSFQFPS) are sufficient for interaction with MAD2L2. A glycan (O-linked (GlcNAc) threonine) is linked at T382. S384 is modified (phosphoserine; by MAPK1 and MAPK8). Residue S390 is modified to Phosphoserine; by MAPK1. T418 is subject to Phosphothreonine; by MAPK1. A Phosphoserine; by MAPK1 modification is found at S423.

The protein belongs to the ETS family. Interacts in its sumoylated form with PIAS2/PIASX which enhances its transcriptional activator activity. Interacts with MAD2L2; the interaction is direct and promotes phosphorylation by the kinases MAPK8 and/or MAPK9. Interacts with POU1F1. In terms of processing, sumoylation represses transcriptional activator activity as it results in recruitment of HDAC2 to target gene promoters which leads to decreased histone acetylation and reduced transactivator activity. It also regulates nuclear retention. On mitogenic stimulation, phosphorylated on C-terminal serine and threonine residues by MAPK1 but also MAPK8 and/or MAPK9. Phosphorylation leads to loss of sumoylation and restores transcriptional activator activity. Phosphorylated and activated by CaMK4, MAPK11, MAPK12 and MAPK14. Upon bFGF stimulus, phosphorylated by PAK1. Phosphorylated by PRP4K at Thr-418; phosphorylation activation ELK1 transcriptional activity. In terms of tissue distribution, predominantly expressed in the brain, and to a lesser extent in the heart, liver and muscle.

Its subcellular location is the nucleus. Functionally, transcription factor that binds to purine-rich DNA sequences. Forms a ternary complex with SRF and the ETS and SRF motifs of the serum response element (SRE) on the promoter region of immediate early genes such as FOS and IER2. Induces target gene transcription upon JNK and MAPK-signaling pathways stimulation. The sequence is that of ETS domain-containing protein Elk-1 from Mus musculus (Mouse).